The chain runs to 338 residues: Ketol-acid reductoisomerase (NADP(+)) (338 aa).

The KARI N-terminal Rossmann domain occupies 1 to 181 (MQVYYDKDCD…GGGRTGIIET (181 aa)). NADP(+) contacts are provided by residues 24–27 (FGSQ), R47, S50, S52, and 82–85 (DEFQ). H107 is an active-site residue. Position 133 (G133) interacts with NADP(+). The region spanning 182–327 (TFKDETETDL…EKLRSMMPWI (146 aa)) is the KARI C-terminal knotted domain. Mg(2+) contacts are provided by D190, E194, E226, and E230. S251 is a substrate binding site.

This sequence belongs to the ketol-acid reductoisomerase family. The cofactor is Mg(2+).

It catalyses the reaction (2R)-2,3-dihydroxy-3-methylbutanoate + NADP(+) = (2S)-2-acetolactate + NADPH + H(+). The enzyme catalyses (2R,3R)-2,3-dihydroxy-3-methylpentanoate + NADP(+) = (S)-2-ethyl-2-hydroxy-3-oxobutanoate + NADPH + H(+). It participates in amino-acid biosynthesis; L-isoleucine biosynthesis; L-isoleucine from 2-oxobutanoate: step 2/4. Its pathway is amino-acid biosynthesis; L-valine biosynthesis; L-valine from pyruvate: step 2/4. In terms of biological role, involved in the biosynthesis of branched-chain amino acids (BCAA). Catalyzes an alkyl-migration followed by a ketol-acid reduction of (S)-2-acetolactate (S2AL) to yield (R)-2,3-dihydroxy-isovalerate. In the isomerase reaction, S2AL is rearranged via a Mg-dependent methyl migration to produce 3-hydroxy-3-methyl-2-ketobutyrate (HMKB). In the reductase reaction, this 2-ketoacid undergoes a metal-dependent reduction by NADPH to yield (R)-2,3-dihydroxy-isovalerate. The protein is Ketol-acid reductoisomerase (NADP(+)) of Marinobacter nauticus (strain ATCC 700491 / DSM 11845 / VT8) (Marinobacter aquaeolei).